The chain runs to 211 residues: Hypoxanthine-guanine phosphoribosyltransferase (211 aa).

Residues 1 to 20 (MSNSAKSPSGPVGDEGRRNY) form a disordered region. GMP contacts are provided by residues Lys66, 125 to 133 (EDIVDSAIT), Lys157, and Asp185. The active-site Proton acceptor is Asp129. Asp185 contacts Mg(2+).

This sequence belongs to the purine/pyrimidine phosphoribosyltransferase family. It depends on Mg(2+) as a cofactor.

It localises to the cytoplasm. The catalysed reaction is IMP + diphosphate = hypoxanthine + 5-phospho-alpha-D-ribose 1-diphosphate. It carries out the reaction GMP + diphosphate = guanine + 5-phospho-alpha-D-ribose 1-diphosphate. Its pathway is purine metabolism; IMP biosynthesis via salvage pathway; IMP from hypoxanthine: step 1/1. Functionally, converts guanine to guanosine monophosphate, and hypoxanthine to inosine monophosphate. Transfers the 5-phosphoribosyl group from 5-phosphoribosylpyrophosphate onto the purine. Plays a central role in the generation of purine nucleotides through the purine salvage pathway. This is Hypoxanthine-guanine phosphoribosyltransferase from Leishmania donovani.